The sequence spans 318 residues: GTP cyclohydrolase MptA (318 aa).

Belongs to the GTP cyclohydrolase IV family. Homodimer. It depends on Fe(2+) as a cofactor.

The catalysed reaction is GTP + H2O = 7,8-dihydroneopterin 2',3'-cyclic phosphate + formate + diphosphate + H(+). Its pathway is cofactor biosynthesis; 5,6,7,8-tetrahydromethanopterin biosynthesis. Functionally, converts GTP to 7,8-dihydro-D-neopterin 2',3'-cyclic phosphate, the first intermediate in the biosynthesis of coenzyme methanopterin. The protein is GTP cyclohydrolase MptA of Methanosarcina mazei (strain ATCC BAA-159 / DSM 3647 / Goe1 / Go1 / JCM 11833 / OCM 88) (Methanosarcina frisia).